The following is a 636-amino-acid chain: 1-deoxy-D-xylulose-5-phosphate synthase (636 aa).

Thiamine diphosphate-binding positions include His84 and 125–127 (GHS). Asp156 serves as a coordination point for Mg(2+). Residues 157–158 (GA), Asn185, Phe292, and Glu375 contribute to the thiamine diphosphate site. Asn185 contributes to the Mg(2+) binding site.

It belongs to the transketolase family. DXPS subfamily. In terms of assembly, homodimer. It depends on Mg(2+) as a cofactor. Thiamine diphosphate serves as cofactor.

The catalysed reaction is D-glyceraldehyde 3-phosphate + pyruvate + H(+) = 1-deoxy-D-xylulose 5-phosphate + CO2. It functions in the pathway metabolic intermediate biosynthesis; 1-deoxy-D-xylulose 5-phosphate biosynthesis; 1-deoxy-D-xylulose 5-phosphate from D-glyceraldehyde 3-phosphate and pyruvate: step 1/1. Functionally, catalyzes the acyloin condensation reaction between C atoms 2 and 3 of pyruvate and glyceraldehyde 3-phosphate to yield 1-deoxy-D-xylulose-5-phosphate (DXP). The chain is 1-deoxy-D-xylulose-5-phosphate synthase from Cellvibrio japonicus (strain Ueda107) (Pseudomonas fluorescens subsp. cellulosa).